A 118-amino-acid chain; its full sequence is Mitochondrial protein YPR099C (118 aa).

It is found in the mitochondrion. Essential for the functional mitochondria and respiratory growth. The chain is Mitochondrial protein YPR099C from Saccharomyces cerevisiae (strain ATCC 204508 / S288c) (Baker's yeast).